The sequence spans 791 residues: DNA repair and recombination protein RAD54-like (791 aa).

The segment covering 1–20 (MRRSLAPSQRIGQSTASRNA) has biased composition (polar residues). Residues 1 to 53 (MRRSLAPSQRIGQSTASRNAFTPPLLQKKNKRACQKDLRLDTDADEDKERKRF) form a disordered region. Residues 2-9 (RRSLAPSQ) form a required for chromatin remodeling, strand pairing activities and coupling of ATPase activity region. Residue threonine 22 is modified to Phosphothreonine. Over residues 34-53 (CQKDLRLDTDADEDKERKRF) the composition is skewed to basic and acidic residues. The 175-residue stretch at 175–349 (EGKKGDFNGC…FSLVNFVNPE (175 aa)) folds into the Helicase ATP-binding domain. 188–195 (DEMGLGKT) is an ATP binding site. Positions 300-303 (DEGH) match the DEGH box motif. In terms of domain architecture, Helicase C-terminal spans 506–663 (LLDFMLAAIR…NNESSEKHFT (158 aa)). A disordered region spans residues 747–791 (KEVVESPESAAAEAESVEEESQPTQRKRPSPPLSDDSADEDFIGF). Over residues 782–791 (DSADEDFIGF) the composition is skewed to acidic residues.

It belongs to the SNF2/RAD54 helicase family. Interacts (via N-terminus) with spn-A/Rad51.

It localises to the nucleus. Functionally, involved in mitotic DNA repair and meiotic recombination. Functions in the recombinational DNA repair pathway. Essential for interhomolog gene conversion (GC), but may have a less important role in intersister GC than spn-A/Rad51. In the presence of DNA, spn-A/Rad51 enhances the ATPase activity of okr/Rad54. In Drosophila ananassae (Fruit fly), this protein is DNA repair and recombination protein RAD54-like.